Reading from the N-terminus, the 342-residue chain is N-acetyl-gamma-glutamyl-phosphate reductase (342 aa).

The active site involves Cys-146.

This sequence belongs to the NAGSA dehydrogenase family. Type 1 subfamily.

It is found in the cytoplasm. The enzyme catalyses N-acetyl-L-glutamate 5-semialdehyde + phosphate + NADP(+) = N-acetyl-L-glutamyl 5-phosphate + NADPH + H(+). It participates in amino-acid biosynthesis; L-arginine biosynthesis; N(2)-acetyl-L-ornithine from L-glutamate: step 3/4. Catalyzes the NADPH-dependent reduction of N-acetyl-5-glutamyl phosphate to yield N-acetyl-L-glutamate 5-semialdehyde. The chain is N-acetyl-gamma-glutamyl-phosphate reductase from Streptomyces coelicolor (strain ATCC BAA-471 / A3(2) / M145).